The sequence spans 323 residues: Aldo-keto reductase family 1 member C2 (323 aa).

NADP(+) is bound by residues 20–24 (GFGTY) and aspartate 50. Tyrosine 24 lines the substrate pocket. The active-site Proton donor is the tyrosine 55. Histidine 117 is a substrate binding site. NADP(+)-binding positions include 166–167 (SN), glutamine 190, and 216–222 (YSALGSH). Residues histidine 222 and tryptophan 227 each coordinate substrate. 270–280 (KSYNEQRIRQN) contributes to the NADP(+) binding site.

It belongs to the aldo/keto reductase family. In terms of tissue distribution, expressed in fetal testes. Expressed in fetal and adult adrenal glands.

Its subcellular location is the cytoplasm. It localises to the cytosol. It catalyses the reaction a 3alpha-hydroxysteroid + NADP(+) = a 3-oxosteroid + NADPH + H(+). It carries out the reaction a 3alpha-hydroxysteroid + NAD(+) = a 3-oxosteroid + NADH + H(+). The catalysed reaction is 5alpha-androstane-3alpha,17beta-diol + NADP(+) = 17beta-hydroxy-5alpha-androstan-3-one + NADPH + H(+). The enzyme catalyses 5alpha-androstane-3alpha,17beta-diol + NAD(+) = 17beta-hydroxy-5alpha-androstan-3-one + NADH + H(+). It catalyses the reaction 5alpha-androstane-3alpha,17beta-diol + NAD(+) = androsterone + NADH + H(+). It carries out the reaction 17beta-estradiol + NADP(+) = estrone + NADPH + H(+). The catalysed reaction is 17beta-estradiol + NAD(+) = estrone + NADH + H(+). The enzyme catalyses (20S)-hydroxypregn-4-en-3-one + NADP(+) = progesterone + NADPH + H(+). It catalyses the reaction (20S)-hydroxypregn-4-en-3-one + NAD(+) = progesterone + NADH + H(+). It carries out the reaction androsterone + NADP(+) = 5alpha-androstan-3,17-dione + NADPH + H(+). The catalysed reaction is (3beta,5alpha,17beta)-3-hydroxy-androstan-17-yl sulfate + NADP(+) = 5alpha-dihydrotestosterone sulfate + NADPH + H(+). The enzyme catalyses (1R,2R)-1,2-dihydrobenzene-1,2-diol + NADP(+) = catechol + NADPH + H(+). It catalyses the reaction (S)-indan-1-ol + NAD(+) = indan-1-one + NADH + H(+). It carries out the reaction (S)-indan-1-ol + NADP(+) = indan-1-one + NADPH + H(+). It functions in the pathway steroid metabolism. Its activity is regulated as follows. Inhibited by hexestrol with an IC(50) of 2.8 uM, 1,10-phenanthroline with an IC(50) of 2100 uM, 1,7-phenanthroline with an IC(50) of 1500 uM, flufenamic acid with an IC(50) of 0.9 uM, indomethacin with an IC(50) of 75 uM, ibuprofen with an IC(50) of 6.9 uM, lithocholic acid with an IC(50) of 0.07 uM, ursodeoxycholic acid with an IC(50) of 0.08 uM and chenodeoxycholic acid with an IC(50) of 0.13 uM. The oxidation reaction is inhibited by low micromolar concentrations of NADPH. Its function is as follows. Cytosolic aldo-keto reductase that catalyzes the NADH and NADPH-dependent reduction of ketosteroids to hydroxysteroids. Most probably acts as a reductase in vivo since the oxidase activity measured in vitro is inhibited by physiological concentrations of NADPH. Displays a broad positional specificity acting on positions 3, 17 and 20 of steroids and regulates the metabolism of hormones like estrogens and androgens. Works in concert with the 5-alpha/5-beta-steroid reductases to convert steroid hormones into the 3-alpha/5-alpha and 3-alpha/5-beta-tetrahydrosteroids. Catalyzes the inactivation of the most potent androgen 5-alpha-dihydrotestosterone (5-alpha-DHT) to 5-alpha-androstane-3-alpha,17-beta-diol (3-alpha-diol). Also specifically able to produce 17beta-hydroxy-5alpha-androstan-3-one/5alphaDHT. May also reduce conjugated steroids such as 5alpha-dihydrotestosterone sulfate. Displays affinity for bile acids. The polypeptide is Aldo-keto reductase family 1 member C2 (AKR1C2) (Homo sapiens (Human)).